The sequence spans 210 residues: Protein GET1 (210 aa).

The Lumenal portion of the chain corresponds to Met1–Leu4. Residues Leu5–Asn24 form a helical membrane-spanning segment. Topologically, residues Thr25–Arg110 are cytoplasmic. Residues Asn39–Leu95 adopt a coiled-coil conformation. The chain crosses the membrane as a helical span at residues Phe111 to Phe131. At Glu132–Thr155 the chain is on the lumenal side. Residues Val156–Ala172 traverse the membrane as a helical segment. The Cytoplasmic portion of the chain corresponds to Gly173 to Leu210. The disordered stretch occupies residues Lys189–Leu210.

It belongs to the WRB/GET1 family. As to quaternary structure, interacts with GET3.

The protein resides in the endoplasmic reticulum membrane. In terms of biological role, required for the post-translational delivery of tail-anchored (TA) proteins to the endoplasmic reticulum. Acts as a membrane receptor for soluble GET3, which recognizes and selectively binds the transmembrane domain of TA proteins in the cytosol. This Coccidioides immitis (strain RS) (Valley fever fungus) protein is Protein GET1.